The sequence spans 128 residues: Large ribosomal subunit protein bL20c (128 aa).

Belongs to the bacterial ribosomal protein bL20 family.

The protein localises to the plastid. The protein resides in the chloroplast. Its function is as follows. Binds directly to 23S ribosomal RNA and is necessary for the in vitro assembly process of the 50S ribosomal subunit. It is not involved in the protein synthesizing functions of that subunit. The protein is Large ribosomal subunit protein bL20c of Trachelium caeruleum (Blue throatwort).